The primary structure comprises 221 residues: Uracil-DNA glycosylase 1 (221 aa).

D61 acts as the Proton acceptor in catalysis.

It belongs to the uracil-DNA glycosylase (UDG) superfamily. UNG family.

The protein resides in the cytoplasm. It catalyses the reaction Hydrolyzes single-stranded DNA or mismatched double-stranded DNA and polynucleotides, releasing free uracil.. Functionally, excises uracil residues from the DNA which can arise as a result of misincorporation of dUMP residues by DNA polymerase or due to deamination of cytosine. The protein is Uracil-DNA glycosylase 1 of Listeria monocytogenes serotype 4b (strain F2365).